A 238-amino-acid chain; its full sequence is MPEKLAKAIANPLFPALDSLLRSGRHIASEDLDNHALLCEFEHELGMFYQRYHAELVKAPEGFFYLRPRSTSLIARSVLAEVDMLVGKVLCFLYLSPERLAHEGIFTNQELFDELLVLADEQKLMKLVTNRASGSDLDKEKLFDKVRTSLRRLKRLGMIIQVGEQGKFRISEAVFRFGADVRSNDDMKEAQLRLIRDGEAVVVHNEESSQSSFDLDENEKLSDISAEEQHELELEGDA.

Positions Glu-206–Ala-238 are disordered. Basic and acidic residues predominate over residues Asn-218–Ala-238.

This sequence belongs to the MukE family. In terms of assembly, interacts, and probably forms a ternary complex, with MukF and MukB. The complex formation is stimulated by calcium or magnesium.

Its subcellular location is the cytoplasm. The protein resides in the nucleoid. Its function is as follows. Involved in chromosome condensation, segregation and cell cycle progression. May participate in facilitating chromosome segregation by condensation DNA from both sides of a centrally located replisome during cell division. Probably acts via its interaction with MukB and MukF. This Aliivibrio salmonicida (strain LFI1238) (Vibrio salmonicida (strain LFI1238)) protein is Chromosome partition protein MukE.